An 89-amino-acid polypeptide reads, in one-letter code: Small ribosomal subunit protein uS14 (89 aa).

It belongs to the universal ribosomal protein uS14 family. As to quaternary structure, part of the 30S ribosomal subunit. Contacts proteins S3 and S10.

Binds 16S rRNA, required for the assembly of 30S particles and may also be responsible for determining the conformation of the 16S rRNA at the A site. The protein is Small ribosomal subunit protein uS14 of Chloroherpeton thalassium (strain ATCC 35110 / GB-78).